The primary structure comprises 152 residues: Deoxyuridine 5'-triphosphate nucleotidohydrolase (152 aa).

Residues 71–73 (RSG), Asn84, 88–90 (LID), and Met98 each bind substrate.

The protein belongs to the dUTPase family. The cofactor is Mg(2+).

The enzyme catalyses dUTP + H2O = dUMP + diphosphate + H(+). It participates in pyrimidine metabolism; dUMP biosynthesis; dUMP from dCTP (dUTP route): step 2/2. Functionally, this enzyme is involved in nucleotide metabolism: it produces dUMP, the immediate precursor of thymidine nucleotides and it decreases the intracellular concentration of dUTP so that uracil cannot be incorporated into DNA. The protein is Deoxyuridine 5'-triphosphate nucleotidohydrolase of Salmonella arizonae (strain ATCC BAA-731 / CDC346-86 / RSK2980).